Reading from the N-terminus, the 328-residue chain is tRNA dimethylallyltransferase (328 aa).

23-30 is an ATP binding site; the sequence is GPTASGKS. A substrate-binding site is contributed by 25 to 30; sequence TASGKS. Residues 48 to 51 form an interaction with substrate tRNA region; it reads DSMQ.

This sequence belongs to the IPP transferase family. Monomer. Requires Mg(2+) as cofactor.

The enzyme catalyses adenosine(37) in tRNA + dimethylallyl diphosphate = N(6)-dimethylallyladenosine(37) in tRNA + diphosphate. Catalyzes the transfer of a dimethylallyl group onto the adenine at position 37 in tRNAs that read codons beginning with uridine, leading to the formation of N6-(dimethylallyl)adenosine (i(6)A). In Rhodopseudomonas palustris (strain BisA53), this protein is tRNA dimethylallyltransferase.